The following is a 348-amino-acid chain: Lysophosphatidic acid receptor 2 (348 aa).

Topologically, residues 1-30 (MGHCYYNETIGFFYNNSGKELSSHWRPKDV) are extracellular. 2 N-linked (GlcNAc...) asparagine glycosylation sites follow: Asn7 and Asn15. A helical membrane pass occupies residues 31-51 (VVVALGLTVSVLVLLTNLLVI). The Cytoplasmic segment spans residues 52-66 (AAIASNRRFHQPIYY). Residues 67–87 (LLGNLAAADLFAGVAYLFLMF) form a helical membrane-spanning segment. The Extracellular portion of the chain corresponds to 88–104 (HTGPRTARLSLEGWFLR). The helical transmembrane segment at 105–124 (QGLLDTSLTASVATLLAIAV) threads the bilayer. The Cytoplasmic segment spans residues 125–143 (ERRRSVMAVQLHSRLPRGR). A helical transmembrane segment spans residues 144–164 (VVMLIVGVWVAALGLGLLPAH). Over 165-185 (SWHCLCALDRCSRMAPLLSRS) the chain is Extracellular. Residues 186 to 206 (YLAVWALSSLLVFLLMVAVYT) form a helical membrane-spanning segment. Residues 207 to 239 (RIFFYVRRRVQRMAEHVSCHPRYRETTLSLVKT) are Cytoplasmic-facing. A helical transmembrane segment spans residues 240–260 (VVIILGAFVVCWTPGQVVLLL). Over 261–276 (DGLGCKSCNVLAVEKY) the chain is Extracellular. A helical transmembrane segment spans residues 277–294 (FLLLAEANSLVNAAVYSC). The Cytoplasmic segment spans residues 295–348 (RDAEMRRTFRRLLCCACLRRSTRESAHYTSSAQGGASTRIMLPENGHPLMDSTL). Cys308 is lipidated: S-palmitoyl cysteine. A PDZ-binding motif is present at residues 345-348 (DSTL).

It belongs to the G-protein coupled receptor 1 family. Interacts with SLC9A3R2/NHERF2, MAGI3 and PLCB3. Interacts with RALA and GRK2.

Its subcellular location is the cell surface. The protein resides in the cell membrane. Functionally, receptor for lysophosphatidic acid (LPA), a mediator of diverse cellular activities. Seems to be coupled to the G(i)/G(o), G(12)/G(13), and G(q) families of heteromeric G proteins. Plays a key role in phospholipase C-beta (PLC-beta) signaling pathway. Stimulates phospholipase C (PLC) activity in a manner that is independent of RALA activation. The chain is Lysophosphatidic acid receptor 2 from Macaca fascicularis (Crab-eating macaque).